We begin with the raw amino-acid sequence, 256 residues long: Kallikrein-15 (256 aa).

Positions 1–16 (MWLLLTLSFLLASTAA) are cleaved as a signal peptide. A propeptide spans 17–21 (QDGDK) (activation peptide). The region spanning 22–254 (LLEGDECAPH…YLEWIRETMK (233 aa)) is the Peptidase S1 domain. An intrachain disulfide couples cysteine 47 to cysteine 63. Catalysis depends on charge relay system residues histidine 62 and aspartate 106. 3 disulfide bridges follow: cysteine 138–cysteine 215, cysteine 180–cysteine 194, and cysteine 205–cysteine 230. The N-linked (GlcNAc...) asparagine glycan is linked to asparagine 171. Serine 209 (charge relay system) is an active-site residue. Asparagine 232 is a glycosylation site (N-linked (GlcNAc...) asparagine).

Belongs to the peptidase S1 family. Kallikrein subfamily. In terms of tissue distribution, highest expression in the thyroid gland. Also expressed in the prostate, salivary, and adrenal glands and in the colon testis and kidney.

It is found in the secreted. Protease whose physiological substrate is not yet known. The sequence is that of Kallikrein-15 (KLK15) from Homo sapiens (Human).